A 341-amino-acid chain; its full sequence is S-adenosylmethionine:tRNA ribosyltransferase-isomerase (341 aa).

Belongs to the QueA family. In terms of assembly, monomer.

The protein resides in the cytoplasm. The enzyme catalyses 7-aminomethyl-7-carbaguanosine(34) in tRNA + S-adenosyl-L-methionine = epoxyqueuosine(34) in tRNA + adenine + L-methionine + 2 H(+). It participates in tRNA modification; tRNA-queuosine biosynthesis. Transfers and isomerizes the ribose moiety from AdoMet to the 7-aminomethyl group of 7-deazaguanine (preQ1-tRNA) to give epoxyqueuosine (oQ-tRNA). The polypeptide is S-adenosylmethionine:tRNA ribosyltransferase-isomerase (Clostridium botulinum (strain Loch Maree / Type A3)).